Reading from the N-terminus, the 175-residue chain is Peptide deformylase (175 aa).

Fe cation is bound by residues Cys99 and His141. Residue Glu142 is part of the active site. His145 lines the Fe cation pocket.

Belongs to the polypeptide deformylase family. Requires Fe(2+) as cofactor.

The catalysed reaction is N-terminal N-formyl-L-methionyl-[peptide] + H2O = N-terminal L-methionyl-[peptide] + formate. Its function is as follows. Removes the formyl group from the N-terminal Met of newly synthesized proteins. Requires at least a dipeptide for an efficient rate of reaction. N-terminal L-methionine is a prerequisite for activity but the enzyme has broad specificity at other positions. This Rickettsia typhi (strain ATCC VR-144 / Wilmington) protein is Peptide deformylase.